An 883-amino-acid polypeptide reads, in one-letter code: Ankyrin repeat and SAM domain-containing protein 6 (883 aa).

ANK repeat units follow at residues 8–37, 68–97, 101–130, 134–163, 181–210, 215–244, 282–312, 316–345, 350–379, and 383–414; these read PGLQLLLRACEQGDTDTARRLLEPGADPVA, AGNSALQLAAAGGHEPLVRFLLRRGASVNS, YGWSALMQAARCGHVSVAHLLLDHGADVNA, LGASVLTVASRGGHLGVVKLLLEAGAIVDH, LGITALMAAVQHGHEAVVRLLMEWGADPNH, VGWSPLMLAALLGKLNVAQQLVEKGANPDH, KRRPDIFYALKMGNFQLVKEIADEDPNHVNL, DGATPLMLAAVTGHLPLVQLLVEKHADMDK, HGWTALMQATYHGNKEIVKYLLNQGADVAL, and NGYTAFDLVMLLNDPDTELVRLLASVCMQVNK. The disordered stretch occupies residues 30–50; the sequence is EPGADPVAGPEAGAEPAGPEA. Disordered regions lie at residues 414–439, 490–522, 566–773, and 852–883; these read KDRGRPSHRPPLPHSKARQPWSIPVL, MRAPPQDRTSHLGPPEAAHATKDSGPGNPRREK, SHTC…ITDE, and SFESSASNTRAPGNGPSMAGWTRPEETVSSRR. Over residues 566–576 the composition is skewed to basic and acidic residues; the sequence is SHTCHNGKADP. The span at 607–630 shows a compositional bias: low complexity; sequence PSISRSPASPASSGSFNHSPHSSG. Over residues 631 to 640 the composition is skewed to gly residues; sequence GASGIGGMSR. Ser-649 carries the post-translational modification Phosphoserine. A compositionally biased stretch (polar residues) spans 649-661; the sequence is SGGSVDSVLSQIA. 2 stretches are compositionally biased toward low complexity: residues 687-711 and 720-737; these read SSSPPELPASLPSSGSGSSSGPSSS and PPSGTSATSKSTSPTLTP. 2 positions are modified to phosphoserine: Ser-732 and Ser-740. Residues 748–768 show a composition bias toward low complexity; it reads SSVSSSSSHRQSKSSGGSSSG. Positions 771 to 834 constitute an SAM domain; the sequence is TDEDELTGIL…LAAISELNAG (64 aa). A compositionally biased stretch (polar residues) spans 852-862; it reads SFESSASNTRA. Basic and acidic residues predominate over residues 874 to 883; sequence RPEETVSSRR.

In terms of assembly, homooligomer. Interacts with NEK8. Central component of a complex containing at least ANKS6, INVS, NEK8 and NPHP3. ANKS6 may organize complex assembly by linking INVS and NPHP3 to NEK8 and INVS may target the complex to the proximal ciliary axoneme. Interacts (via SAM domain) with BICC1 (via KH domains) in an RNA-dependent manner. Interacts (via SAM domain) with ANKS3 (via SAM domain). Hydroxylated at Asn-129, most probably by HIF1AN. This hydroxylation results in decreased NEK8-binding. As to expression, expressed in kidney (at protein level).

It is found in the cell projection. It localises to the cilium. Its subcellular location is the cytoplasm. Functionally, required for renal function. This Mus musculus (Mouse) protein is Ankyrin repeat and SAM domain-containing protein 6 (Anks6).